Consider the following 186-residue polypeptide: NADH-dependent FMN reductase SfnE (186 aa).

This sequence belongs to the SsuE family.

It catalyses the reaction FMNH2 + NAD(+) = FMN + NADH + 2 H(+). Its function is as follows. Involved in the dimethyl sulfide degradation pathway. Catalyzes the NADH-dependent reduction of FMN. The chain is NADH-dependent FMN reductase SfnE from Pseudomonas putida (Arthrobacter siderocapsulatus).